A 448-amino-acid polypeptide reads, in one-letter code: Probable 3-ketoacyl-CoA thiolase (448 aa).

Residue Cys110 is the Acyl-thioester intermediate of the active site. Residues His402 and Cys432 each act as proton acceptor in the active site.

This sequence belongs to the thiolase-like superfamily. Thiolase family.

The protein resides in the mitochondrion. The enzyme catalyses an acyl-CoA + acetyl-CoA = a 3-oxoacyl-CoA + CoA. The protein operates within lipid metabolism; fatty acid beta-oxidation. In terms of biological role, mitochondrial enzyme that catalyzes reactions of the mitochondrial beta-oxidation pathway. This is Probable 3-ketoacyl-CoA thiolase from Caenorhabditis elegans.